We begin with the raw amino-acid sequence, 154 residues long: Large ribosomal subunit protein uL15 (154 aa).

Basic and acidic residues predominate over residues 1–13 (MKLNELRDHEGAT). The tract at residues 1–44 (MKLNELRDHEGATKNRKRIGRGIGSGTGKTGGCGVKGQKSRSGV) is disordered. The span at 21–35 (RGIGSGTGKTGGCGV) shows a compositional bias: gly residues.

The protein belongs to the universal ribosomal protein uL15 family. Part of the 50S ribosomal subunit.

Functionally, binds to the 23S rRNA. This chain is Large ribosomal subunit protein uL15, found in Bartonella bacilliformis (strain ATCC 35685 / KC583 / Herrer 020/F12,63).